Consider the following 74-residue polypeptide: Heat shock factor-binding protein 1-like protein 1 (74 aa).

The stretch at 12-65 (RALRDAAENLFQELQEHFQALTATLNLRMEEMGNRIEDLQKNVKDLMVQAGIEN) forms a coiled coil.

Belongs to the HSBP1 family.

The protein is Heat shock factor-binding protein 1-like protein 1 (HSBP1L1) of Homo sapiens (Human).